We begin with the raw amino-acid sequence, 204 residues long: Leucyl/phenylalanyl-tRNA--protein transferase (204 aa).

This sequence belongs to the L/F-transferase family.

It localises to the cytoplasm. The catalysed reaction is N-terminal L-lysyl-[protein] + L-leucyl-tRNA(Leu) = N-terminal L-leucyl-L-lysyl-[protein] + tRNA(Leu) + H(+). The enzyme catalyses N-terminal L-arginyl-[protein] + L-leucyl-tRNA(Leu) = N-terminal L-leucyl-L-arginyl-[protein] + tRNA(Leu) + H(+). It carries out the reaction L-phenylalanyl-tRNA(Phe) + an N-terminal L-alpha-aminoacyl-[protein] = an N-terminal L-phenylalanyl-L-alpha-aminoacyl-[protein] + tRNA(Phe). In terms of biological role, functions in the N-end rule pathway of protein degradation where it conjugates Leu, Phe and, less efficiently, Met from aminoacyl-tRNAs to the N-termini of proteins containing an N-terminal arginine or lysine. In Sinorhizobium medicae (strain WSM419) (Ensifer medicae), this protein is Leucyl/phenylalanyl-tRNA--protein transferase.